A 266-amino-acid chain; its full sequence is Putative carbamate hydrolase RutD (266 aa).

This sequence belongs to the AB hydrolase superfamily. Hydrolase RutD family.

It catalyses the reaction carbamate + 2 H(+) = NH4(+) + CO2. Its function is as follows. Involved in pyrimidine catabolism. May facilitate the hydrolysis of carbamate, a reaction that can also occur spontaneously. This Enterobacter cloacae subsp. cloacae (strain ATCC 13047 / DSM 30054 / NBRC 13535 / NCTC 10005 / WDCM 00083 / NCDC 279-56) protein is Putative carbamate hydrolase RutD.